Here is a 98-residue protein sequence, read N- to C-terminus: NADH-ubiquinone oxidoreductase chain 4L (98 aa).

Helical transmembrane passes span 1–21 (MTPTHFTISSAFLLGMMGLAF), 26–46 (LLSALLCLEAMMLALFIALSL), and 59–79 (APMLMLAFSACEASAGLALLV).

Belongs to the complex I subunit 4L family.

It is found in the mitochondrion membrane. The enzyme catalyses a ubiquinone + NADH + 5 H(+)(in) = a ubiquinol + NAD(+) + 4 H(+)(out). Functionally, core subunit of the mitochondrial membrane respiratory chain NADH dehydrogenase (Complex I) which catalyzes electron transfer from NADH through the respiratory chain, using ubiquinone as an electron acceptor. Part of the enzyme membrane arm which is embedded in the lipid bilayer and involved in proton translocation. This is NADH-ubiquinone oxidoreductase chain 4L (MT-ND4L) from Gadus morhua (Atlantic cod).